Here is a 138-residue protein sequence, read N- to C-terminus: Ribosome-binding factor A (138 aa).

The segment at 117–138 (AEDGQHQEGPASADAKPESTEE) is disordered.

Belongs to the RbfA family. In terms of assembly, monomer. Binds 30S ribosomal subunits, but not 50S ribosomal subunits or 70S ribosomes.

The protein resides in the cytoplasm. One of several proteins that assist in the late maturation steps of the functional core of the 30S ribosomal subunit. Associates with free 30S ribosomal subunits (but not with 30S subunits that are part of 70S ribosomes or polysomes). Required for efficient processing of 16S rRNA. May interact with the 5'-terminal helix region of 16S rRNA. This chain is Ribosome-binding factor A, found in Pseudomonas syringae pv. syringae (strain B728a).